A 78-amino-acid chain; its full sequence is MANIKSAIKRAELNVKQNEKNSAQKSALRTVIKAFKANPTEEAFRAASASIDKAASKGLIHKNKASRDKSRLAAKLAN.

This sequence belongs to the bacterial ribosomal protein bS20 family.

In terms of biological role, binds directly to 16S ribosomal RNA. This is Small ribosomal subunit protein bS20 from Streptococcus thermophilus (strain ATCC BAA-491 / LMD-9).